Reading from the N-terminus, the 399-residue chain is Insertion element IS900 uncharacterized 42 kDa protein (399 aa).

It belongs to the transposase IS1111A/IS1328/IS1533 family.

This chain is Insertion element IS900 uncharacterized 42 kDa protein, found in Mycobacterium paratuberculosis.